Consider the following 117-residue polypeptide: Reprimo-like protein (117 aa).

The chain crosses the membrane as a helical span at residues 64-84 (VAQIAVLCVLSLTVVFGVFFL). A Phosphoserine modification is found at Ser106.

This sequence belongs to the reprimo family.

It is found in the membrane. The protein is Reprimo-like protein (Rprml) of Mus musculus (Mouse).